The primary structure comprises 635 residues: MHLSEITHPNQLHGLSIRQLQQIARQIRDKHLQTVAEFGGHLGPGLGVVELTLGLYQTLDLDRDKVIWDVGHQAYPHKLITGRYSDFHTLRQKDGIAGYLKRGENKFDHFGAGHASTSISAALGMALARDMNGEKFKAVAVIGDGALTGGMALEAINHAGHLPKTNLLVVLNDNEMSISPNVGAIPRYLNKMRLSPPVQFIKDNFEEQFKHIPFVGESLSPELGRIKEGMKRLAVPKVGAVFEELGFTYMGPVDGHNLEELIATFQQAHQIAGPVLVHVATIKGKGYELAEKDQVGYHAQTPFNLTTGKAIPSNKPKPPAYAKVFSHTLVKLAEQNPKIIGITAAMATGTGLDKLQAKLPNQYIDVGIAEQHAVTLAAGLACEGMRPVAAIYSTFLQRAYDQIIHDVCIQNLPVFFCLDRAGIVGSDGPTHQGMYDIAYLRCIPNIVMMAPKDEAEMQRMVVTGIEYTTGPIAMRFPRGNGYGVPLMEEGWEPLEIGKGEILRNGDDVLIIGYGTMVYPSMQAAEILSEHGIEATVINARFVKPLDTELIVPLAQKIGRVVTLEEGCVMGGFGSAVAEALLDADVVVPVKRIGIPDVLVEHATPDESKAELGLTSRQIAERVLQAYFQKQVSAVI.

Thiamine diphosphate-binding positions include His72 and Gly113–Ala115. Asp144 contributes to the Mg(2+) binding site. Residues Gly145–Ala146, Asn174, Tyr287, and Glu370 each bind thiamine diphosphate. Asn174 serves as a coordination point for Mg(2+).

Belongs to the transketolase family. DXPS subfamily. Homodimer. Mg(2+) is required as a cofactor. It depends on thiamine diphosphate as a cofactor.

The enzyme catalyses D-glyceraldehyde 3-phosphate + pyruvate + H(+) = 1-deoxy-D-xylulose 5-phosphate + CO2. Its pathway is metabolic intermediate biosynthesis; 1-deoxy-D-xylulose 5-phosphate biosynthesis; 1-deoxy-D-xylulose 5-phosphate from D-glyceraldehyde 3-phosphate and pyruvate: step 1/1. Its function is as follows. Catalyzes the acyloin condensation reaction between C atoms 2 and 3 of pyruvate and glyceraldehyde 3-phosphate to yield 1-deoxy-D-xylulose-5-phosphate (DXP). The polypeptide is 1-deoxy-D-xylulose-5-phosphate synthase (Trichormus variabilis (strain ATCC 29413 / PCC 7937) (Anabaena variabilis)).